The chain runs to 128 residues: MGLMWGLFSVIIASAAQLSLGFAASHLPPMTHLWDFIAALLAFGLDARILLLGLQGYLLSVFCWYKTLHKLALSKAYALLSMSYVLVWIASMVLPGWEGTFSLKALLGVACIMSGLMLIFLPTTKQRY.

Topologically, residues 1 to 2 are cytoplasmic; it reads MG. The helical transmembrane segment at 3–23 threads the bilayer; the sequence is LMWGLFSVIIASAAQLSLGFA. Over 24 to 32 the chain is Periplasmic; it reads ASHLPPMTH. A helical membrane pass occupies residues 33–53; sequence LWDFIAALLAFGLDARILLLG. Residues 54 to 76 are Cytoplasmic-facing; sequence LQGYLLSVFCWYKTLHKLALSKA. The helical transmembrane segment at 77–97 threads the bilayer; that stretch reads YALLSMSYVLVWIASMVLPGW. The Periplasmic portion of the chain corresponds to 98 to 100; that stretch reads EGT. A helical transmembrane segment spans residues 101-121; it reads FSLKALLGVACIMSGLMLIFL. At 122-128 the chain is on the cytoplasmic side; that stretch reads PTTKQRY.

This sequence belongs to the ArnF family. Heterodimer of ArnE and ArnF.

The protein localises to the cell inner membrane. Its pathway is bacterial outer membrane biogenesis; lipopolysaccharide biosynthesis. In terms of biological role, translocates 4-amino-4-deoxy-L-arabinose-phosphoundecaprenol (alpha-L-Ara4N-phosphoundecaprenol) from the cytoplasmic to the periplasmic side of the inner membrane. In Escherichia coli O7:K1 (strain IAI39 / ExPEC), this protein is Probable 4-amino-4-deoxy-L-arabinose-phosphoundecaprenol flippase subunit ArnF.